Reading from the N-terminus, the 362-residue chain is Protein RecA (362 aa).

77–84 contributes to the ATP binding site; it reads GPESSGKT.

It belongs to the RecA family.

The protein resides in the cytoplasm. Can catalyze the hydrolysis of ATP in the presence of single-stranded DNA, the ATP-dependent uptake of single-stranded DNA by duplex DNA, and the ATP-dependent hybridization of homologous single-stranded DNAs. It interacts with LexA causing its activation and leading to its autocatalytic cleavage. This chain is Protein RecA, found in Rhizobium etli (strain ATCC 51251 / DSM 11541 / JCM 21823 / NBRC 15573 / CFN 42).